The following is a 321-amino-acid chain: Solute carrier family 25 member 33 (321 aa).

Solcar repeat units follow at residues 9–118, 126–213, and 231–315; these read ENTL…AKEQ, NSNI…LKKY, and TNFF…IVYL. The next 6 helical transmembrane spans lie at 12–32, 49–65, 121–141, 190–210, 233–253, and 298–318; these read LLHLFAGGCGGTVGAIFTCPL, VYYPQVHLGTISGAGVV, GVFVPNSNIVHVFSAGSAAFV, LTASYAGISETIICFAIYESL, FFGLMAAAALSKGCASCVAYP, and QIPNTAIVLSTYELIVYLLED.

It belongs to the mitochondrial carrier (TC 2.A.29) family.

It is found in the mitochondrion inner membrane. It catalyses the reaction UTP(in) + UDP(out) = UTP(out) + UDP(in). The enzyme catalyses dUTP(out) + UTP(in) = dUTP(in) + UTP(out). The catalysed reaction is 5-methyl-UTP(out) + UTP(in) = 5-methyl-UTP(in) + UTP(out). It carries out the reaction 5-methyl-UDP(out) + UTP(in) = 5-methyl-UDP(in) + UTP(out). It catalyses the reaction UTP(in) + CTP(out) = UTP(out) + CTP(in). The enzyme catalyses CDP(out) + UTP(in) = CDP(in) + UTP(out). The catalysed reaction is dCTP(out) + UTP(in) = dCTP(in) + UTP(out). It carries out the reaction dCDP(out) + UTP(in) = dCDP(in) + UTP(out). It catalyses the reaction UTP(in) + GTP(out) = UTP(out) + GTP(in). The enzyme catalyses UTP(in) + GDP(out) = UTP(out) + GDP(in). The catalysed reaction is dGTP(out) + UTP(in) = dGTP(in) + UTP(out). It carries out the reaction dGDP(out) + UTP(in) = dGDP(in) + UTP(out). It catalyses the reaction ITP(out) + UTP(in) = ITP(in) + UTP(out). Its function is as follows. Mitochondrial transporter that imports/exports pyrimidine nucleotides into and from mitochondria. Selectively transports uridine, thymidine, guanosine, cytosine and inosine (deoxy)nucleoside di- and triphosphates by an antiport mechanism. May import (deoxy)nucleoside triphosphates in exchange for intramitochondrial (deoxy)nucleoside diphosphates, thus providing precursors necessary for de novo synthesis of mitochondrial DNA and RNA while exporting products of their catabolism. Participates in mitochondrial genome maintenance, regulation of mitochondrial membrane potential and mitochondrial respiration. Upon INS or IGF1 stimulation regulates cell growth and proliferation by controlling mitochondrial DNA replication and transcription, the ratio of mitochondria-to nuclear-encoded components of the electron transport chain resulting in control of mitochondrial ROS production. Participates in dendritic cell endocytosis and may associate with mitochondrial oxidative phosphorylation. This is Solute carrier family 25 member 33 (SLC25A33) from Bos taurus (Bovine).